We begin with the raw amino-acid sequence, 289 residues long: uncharacterized protein (289 aa).

Positions 1-23 (MIKNYKLLLFTTFTLFFITFVSG) are cleaved as a signal peptide. N-linked (GlcNAc...) asparagine glycans are attached at residues asparagine 74, asparagine 101, asparagine 132, and asparagine 285.

The protein localises to the secreted. This is an uncharacterized protein from Dictyostelium discoideum (Social amoeba).